The following is a 632-amino-acid chain: Sodium- and chloride-dependent GABA transporter 3 (632 aa).

Residues 1 to 41 (MTAEKALPLGNGKAAEEARESEAPGGGCSSGGAAPARHPRV) form a disordered region. At 1 to 58 (MTAEKALPLGNGKAAEEARESEAPGGGCSSGGAAPARHPRVKRDKAVHERGHWNNKVE) the chain is on the cytoplasmic side. The residue at position 21 (S21) is a Phosphoserine. 3 helical membrane-spanning segments follow: residues 59-79 (FVLS…FPYL), 87-106 (AFLI…VFFL), and 131-151 (GIGY…IIIL). Residues 152–225 (AWAIFYLSNC…DGIEHIGNLR (74 aa)) are Extracellular-facing. N187, N190, and N198 each carry an N-linked (GlcNAc...) asparagine glycan. A run of 9 helical transmembrane segments spans residues 226 to 244 (WELA…FCIW), 253 to 270 (VVYV…ILLI), 306 to 323 (IFFS…LGSY), 335 to 356 (IMLC…FSVL), 389 to 408 (MPLS…FLGL), 438 to 456 (LLIL…VMLT), 473 to 493 (GMCL…VYGS), 514 to 533 (WCWM…FFLI), and 553 to 571 (IGWL…WICI). At 572-632 (TVWKTEGTLP…AAITEKETHF (61 aa)) the chain is on the cytoplasmic side.

The protein belongs to the sodium:neurotransmitter symporter (SNF) (TC 2.A.22) family. SLC6A11 subfamily. In terms of tissue distribution, widespread distribution in the brain.

It localises to the cell membrane. The catalysed reaction is 4-aminobutanoate(out) + chloride(out) + 2 Na(+)(out) = 4-aminobutanoate(in) + chloride(in) + 2 Na(+)(in). It carries out the reaction taurine(out) + chloride(out) + 2 Na(+)(out) = taurine(in) + chloride(in) + 2 Na(+)(in). It catalyses the reaction beta-alanine(out) + chloride(out) + 2 Na(+)(out) = beta-alanine(in) + chloride(in) + 2 Na(+)(in). The enzyme catalyses hypotaurine(out) + chloride(out) + 2 Na(+)(out) = hypotaurine(in) + chloride(in) + 2 Na(+)(in). With respect to regulation, GABA transport is inhibited by SNAP-5114. In terms of biological role, mediates sodium- and chloride-dependent transport of gamma-aminobutyric acid (GABA). Can also mediate transport of beta-alanine and to a lower extent that of taurine and hypotaurine. The polypeptide is Sodium- and chloride-dependent GABA transporter 3 (SLC6A11) (Homo sapiens (Human)).